A 626-amino-acid chain; its full sequence is Elongation factor 4 (626 aa).

In terms of domain architecture, tr-type G spans 14–195 (SVIRNFCIIA…QIVMDVPAPH (182 aa)). GTP contacts are provided by residues 26 to 31 (DHGKST) and 142 to 145 (NKID). Residues 603–626 (LSTGEDSNDRDTKDKIRAAQKTEG) form a disordered region. The segment covering 609-626 (SNDRDTKDKIRAAQKTEG) has biased composition (basic and acidic residues).

This sequence belongs to the TRAFAC class translation factor GTPase superfamily. Classic translation factor GTPase family. LepA subfamily.

The protein resides in the cell membrane. The catalysed reaction is GTP + H2O = GDP + phosphate + H(+). In terms of biological role, required for accurate and efficient protein synthesis under certain stress conditions. May act as a fidelity factor of the translation reaction, by catalyzing a one-codon backward translocation of tRNAs on improperly translocated ribosomes. Back-translocation proceeds from a post-translocation (POST) complex to a pre-translocation (PRE) complex, thus giving elongation factor G a second chance to translocate the tRNAs correctly. Binds to ribosomes in a GTP-dependent manner. This chain is Elongation factor 4, found in Bifidobacterium longum subsp. infantis (strain ATCC 15697 / DSM 20088 / JCM 1222 / NCTC 11817 / S12).